A 536-amino-acid chain; its full sequence is Sensory rhodopsin I transducer (536 aa).

At 2–14 (TIAWARRRYGVKL) the chain is on the cytoplasmic side. A helical transmembrane segment spans residues 15–29 (GLGYIATAGLLVGVG). The Extracellular segment spans residues 30-39 (VTTNDVPSTI). A helical membrane pass occupies residues 40–55 (VAGIAGLLTLGSINAA). The HAMP 1 domain occupies 55–107 (AETVASIKEIAAQTERVANGNLEQEVTSTRTDEFGSLADSIEQMRQSLRGRLN). At 56-536 (ETVASIKEIA…MRAGADGGGA (481 aa)) the chain is on the cytoplasmic side. Positions 116–145 (LEETQAEAETAREEAEQAKQEAQAAEREAR) are disordered. A compositionally biased stretch (basic and acidic residues) spans 124 to 145 (ETAREEAEQAKQEAQAAEREAR). The region spanning 149 to 202 (ATYQDTAKRYGETMEAAATGDLTQRVDVDTDHEAMETVGTAFNQMMDDLQATVR) is the HAMP 2 domain. Positions 221–459 (TSADIEASAG…STATSVERVA (239 aa)) constitute a Methyl-accepting transducer domain. Glutamate 266 carries the post-translational modification Glutamate methyl ester (Glu). The segment at 278–307 (SEDVATASDAARDSSKSALDEMSSIETEVD) is disordered. Residues 287-296 (AARDSSKSAL) are compositionally biased toward basic and acidic residues. Residue glutamate 473 is modified to Glutamate methyl ester (Glu). The disordered stretch occupies residues 512–536 (TEDSETAGGSVEQPVMRAGADGGGA).

Belongs to the methyl-accepting chemotaxis (MCP) protein family. Post-translationally, methylated by CheR.

Its subcellular location is the cell membrane. Functionally, transduces signals from the phototaxis receptor sensory rhodopsin I (SR-I) to the flagellar motor. Responds to light changes through the variation of the level of methylation. The sequence is that of Sensory rhodopsin I transducer (htr1) from Halobacterium salinarum (strain ATCC 29341 / DSM 671 / R1).